A 164-amino-acid chain; its full sequence is ATP synthase subunit b (164 aa).

A helical membrane pass occupies residues 12–32; it reads FILVTGSVIVLLLLIKAFAWG.

It belongs to the ATPase B chain family. F-type ATPases have 2 components, F(1) - the catalytic core - and F(0) - the membrane proton channel. F(1) has five subunits: alpha(3), beta(3), gamma(1), delta(1), epsilon(1). F(0) has three main subunits: a(1), b(2) and c(10-14). The alpha and beta chains form an alternating ring which encloses part of the gamma chain. F(1) is attached to F(0) by a central stalk formed by the gamma and epsilon chains, while a peripheral stalk is formed by the delta and b chains.

The protein resides in the cell membrane. Functionally, f(1)F(0) ATP synthase produces ATP from ADP in the presence of a proton or sodium gradient. F-type ATPases consist of two structural domains, F(1) containing the extramembraneous catalytic core and F(0) containing the membrane proton channel, linked together by a central stalk and a peripheral stalk. During catalysis, ATP synthesis in the catalytic domain of F(1) is coupled via a rotary mechanism of the central stalk subunits to proton translocation. Its function is as follows. Component of the F(0) channel, it forms part of the peripheral stalk, linking F(1) to F(0). The chain is ATP synthase subunit b from Streptococcus equi subsp. zooepidemicus (strain MGCS10565).